A 276-amino-acid chain; its full sequence is Type II pantothenate kinase (276 aa).

Residue 8-15 (DAGGTLTK) participates in ATP binding. The active-site Proton acceptor is Glu76. Residues Thr105, 127–131 (GGTIM), Phe143, and Ser230 contribute to the ATP site.

This sequence belongs to the type II pantothenate kinase family. As to quaternary structure, homodimer.

Its subcellular location is the cytoplasm. The enzyme catalyses (R)-pantothenate + ATP = (R)-4'-phosphopantothenate + ADP + H(+). Its pathway is cofactor biosynthesis; coenzyme A biosynthesis; CoA from (R)-pantothenate: step 1/5. Its function is as follows. Catalyzes the phosphorylation of pantothenate (Pan), the first step in CoA biosynthesis. The chain is Type II pantothenate kinase from Bacillus cereus (strain AH820).